The sequence spans 352 residues: Photosystem II D2 protein (352 aa).

Residues cysteine 40–threonine 60 traverse the membrane as a helical segment. Histidine 117 is a binding site for chlorophyll a. Residues glycine 124–proline 140 traverse the membrane as a helical segment. The pheophytin a site is built by glutamine 129 and asparagine 142. The chain crosses the membrane as a helical span at residues valine 152 to serine 165. Residue histidine 197 coordinates chlorophyll a. The helical transmembrane segment at glycine 207 to glutamate 227 threads the bilayer. Residues histidine 214 and phenylalanine 261 each contribute to the a plastoquinone site. Histidine 214 is a Fe cation binding site. Histidine 268 is a Fe cation binding site. A helical transmembrane segment spans residues glycine 278 to arginine 294.

The protein belongs to the reaction center PufL/M/PsbA/D family. In terms of assembly, PSII is composed of 1 copy each of membrane proteins PsbA, PsbB, PsbC, PsbD, PsbE, PsbF, PsbH, PsbI, PsbJ, PsbK, PsbL, PsbM, PsbT, PsbX, PsbY, PsbZ, Psb30/Ycf12, peripheral proteins PsbO, CyanoQ (PsbQ), PsbU, PsbV and a large number of cofactors. It forms dimeric complexes. The D1/D2 heterodimer binds P680, chlorophylls that are the primary electron donor of PSII, and subsequent electron acceptors. It shares a non-heme iron and each subunit binds pheophytin, quinone, additional chlorophylls, carotenoids and lipids. There is also a Cl(-1) ion associated with D1 and D2, which is required for oxygen evolution. The PSII complex binds additional chlorophylls, carotenoids and specific lipids. is required as a cofactor.

It is found in the cellular thylakoid membrane. It carries out the reaction 2 a plastoquinone + 4 hnu + 2 H2O = 2 a plastoquinol + O2. Photosystem II (PSII) is a light-driven water:plastoquinone oxidoreductase that uses light energy to abstract electrons from H(2)O, generating O(2) and a proton gradient subsequently used for ATP formation. It consists of a core antenna complex that captures photons, and an electron transfer chain that converts photonic excitation into a charge separation. The D1/D2 (PsbA/PsbD) reaction center heterodimer binds P680, the primary electron donor of PSII as well as several subsequent electron acceptors. D2 is needed for assembly of a stable PSII complex. The sequence is that of Photosystem II D2 protein from Synechococcus elongatus (strain ATCC 33912 / PCC 7942 / FACHB-805) (Anacystis nidulans R2).